A 67-amino-acid polypeptide reads, in one-letter code: DNA-directed RNA polymerase subunit omega (67 aa).

This sequence belongs to the RNA polymerase subunit omega family. The RNAP catalytic core consists of 2 alpha, 1 beta, 1 beta' and 1 omega subunit. When a sigma factor is associated with the core the holoenzyme is formed, which can initiate transcription.

The catalysed reaction is RNA(n) + a ribonucleoside 5'-triphosphate = RNA(n+1) + diphosphate. Promotes RNA polymerase assembly. Latches the N- and C-terminal regions of the beta' subunit thereby facilitating its interaction with the beta and alpha subunits. The protein is DNA-directed RNA polymerase subunit omega of Polaromonas sp. (strain JS666 / ATCC BAA-500).